The chain runs to 277 residues: Serine protease 33 (277 aa).

An N-terminal signal peptide occupies residues 1–24; the sequence is MRGASHLQILLLLVLGTRMQECAA. The 243-residue stretch at 34-276 folds into the Peptidase S1 domain; it reads IVGGRDAQDG…YSPWIQARLS (243 aa). A disulfide bridge links C59 with C75. Catalysis depends on charge relay system residues H74 and D123. 3 cysteine pairs are disulfide-bonded: C157–C234, C190–C213, and C224–C252. Catalysis depends on S228, which acts as the Charge relay system.

It belongs to the peptidase S1 family. Not glycosylated. Widely expressed.

The protein resides in the secreted. Its function is as follows. Serine protease that has amidolytic activity, cleaving its substrates before Arg residues. This Mus musculus (Mouse) protein is Serine protease 33 (Prss33).